The sequence spans 330 residues: Phosphate acyltransferase (330 aa).

It belongs to the PlsX family. Homodimer. Probably interacts with PlsY.

It is found in the cytoplasm. The catalysed reaction is a fatty acyl-[ACP] + phosphate = an acyl phosphate + holo-[ACP]. It participates in lipid metabolism; phospholipid metabolism. Functionally, catalyzes the reversible formation of acyl-phosphate (acyl-PO(4)) from acyl-[acyl-carrier-protein] (acyl-ACP). This enzyme utilizes acyl-ACP as fatty acyl donor, but not acyl-CoA. The polypeptide is Phosphate acyltransferase (Carboxydothermus hydrogenoformans (strain ATCC BAA-161 / DSM 6008 / Z-2901)).